The primary structure comprises 397 residues: Xyloglucan O-acetyltransferase 3 (397 aa).

Over 1–3 (MNR) the chain is Cytoplasmic. The helical; Signal-anchor for type II membrane protein transmembrane segment at 4–24 (FFYTVGLIFLFSFFILYSPKT) threads the bilayer. Residues 25–397 (SDLSNNVDLH…RHAFTDFTWS (373 aa)) lie on the Lumenal side of the membrane. Intrachain disulfides connect cysteine 48–cysteine 98, cysteine 69–cysteine 134, cysteine 78–cysteine 370, and cysteine 293–cysteine 366. N-linked (GlcNAc...) asparagine glycosylation is present at asparagine 66. Residues 121 to 123 (GDS) carry the GDS motif motif. Serine 123 functions as the Nucleophile in the catalytic mechanism. Asparagine 162, asparagine 182, and asparagine 294 each carry an N-linked (GlcNAc...) asparagine glycan. Aspartate 365 serves as the catalytic Proton donor. Positions 365-368 (DCVH) match the DXXH motif motif. Residue histidine 368 is the Proton acceptor of the active site.

Belongs to the PC-esterase family. TBL subfamily.

Its subcellular location is the golgi apparatus membrane. In terms of biological role, xyloglucan acetyltransferase that catalyzes the acetylation of fucosylated Gal residues on xyloglucan side chains. Predominantly catalyze 6-O-monoacetylation of Gal residues in the Fuc-Gal-Xyl trisaccharide side chains of xyloglucan oligomers. The polypeptide is Xyloglucan O-acetyltransferase 3 (Populus trichocarpa (Western balsam poplar)).